A 27-amino-acid chain; its full sequence is NADH-ubiquinone oxidoreductase chain 1 (27 aa).

Residues 3-23 form a helical membrane-spanning segment; it reads LIFPLVGSLLLVICVMVGVAF.

It belongs to the complex I subunit 1 family.

It localises to the mitochondrion inner membrane. The enzyme catalyses a ubiquinone + NADH + 5 H(+)(in) = a ubiquinol + NAD(+) + 4 H(+)(out). In terms of biological role, core subunit of the mitochondrial membrane respiratory chain NADH dehydrogenase (Complex I) that is believed to belong to the minimal assembly required for catalysis. Complex I functions in the transfer of electrons from NADH to the respiratory chain. The immediate electron acceptor for the enzyme is believed to be ubiquinone. In Simulium vittatum (Striped black fly), this protein is NADH-ubiquinone oxidoreductase chain 1 (ND1).